Consider the following 172-residue polypeptide: Co-chaperone protein HscB homolog (172 aa).

Residues 2–74 form the J domain; it reads NYFELFGLVE…LRRAEYLLSL (73 aa).

The protein belongs to the HscB family. As to quaternary structure, interacts with HscA and stimulates its ATPase activity.

In terms of biological role, co-chaperone involved in the maturation of iron-sulfur cluster-containing proteins. Seems to help targeting proteins to be folded toward HscA. The polypeptide is Co-chaperone protein HscB homolog (Aeromonas hydrophila subsp. hydrophila (strain ATCC 7966 / DSM 30187 / BCRC 13018 / CCUG 14551 / JCM 1027 / KCTC 2358 / NCIMB 9240 / NCTC 8049)).